Reading from the N-terminus, the 1253-residue chain is Myosin heavy chain 95F (1253 aa).

The 52-residue stretch at 3-54 (EDTQLVWVRDAAEGYIQGRITEIGAKEFEVTPTDRKYPKRTCHFDDIHSSCD) folds into the Myosin N-terminal SH3-like domain. Residues 57 to 766 (QDHDDNCELM…KFVEFDRIMR (710 aa)) enclose the Myosin motor domain. 151–158 (GESGAGKT) is an ATP binding site. An actin-binding region spans residues 647–666 (GELMEKLEQNGTNFIRCIKP). The region spanning 808–837 (RNKCVLIAQRIARGFLARKQHRPRYQGIGK) is the IQ domain. Residues 900-1022 (ANMNKLTVDL…LRLANESNGQ (123 aa)) are a coiled coil. Residues 1187-1193 (PILLVAG) are hydrophobic region. Residues 1233–1253 (AYKNLGAAKPNGPAAAMQKQQ) are disordered.

Belongs to the TRAFAC class myosin-kinesin ATPase superfamily. Myosin family. As to expression, isoform B is present at a higher level in the head and gonads than in the thoraxes. Isoform 145 kDa is found only in the head. CLIP-190 and jar are coexpressed at several times in development and in a number of tissues, including embryonic axonal neuron processes and posterior pole.

The protein resides in the cytoplasm. Its subcellular location is the cytoskeleton. Functionally, myosin is a protein that binds to actin and has ATPase activity that is activated by actin. Together CLIP-190 and jar may coordinate the interaction between the actin and microtubule cytoskeleton. May link endocytic vesicles to microtubules and may be involved in transport in the early embryo and in the dynamic process of dorsal closure. It is believed that its function changes during the life cycle. This Drosophila melanogaster (Fruit fly) protein is Myosin heavy chain 95F (jar).